Consider the following 238-residue polypeptide: Probable transcriptional regulatory protein CAB166 (238 aa).

Belongs to the TACO1 family.

The protein localises to the cytoplasm. The polypeptide is Probable transcriptional regulatory protein CAB166 (Chlamydia abortus (strain DSM 27085 / S26/3) (Chlamydophila abortus)).